Here is a 217-residue protein sequence, read N- to C-terminus: Small ribosomal subunit protein uS3c (217 aa).

Residues 47-119 (VRTHIKSSSN…KLHIAIEKVA (73 aa)) form the KH type-2 domain.

It belongs to the universal ribosomal protein uS3 family. Part of the 30S ribosomal subunit.

The protein resides in the plastid. It localises to the chloroplast. This Pinus koraiensis (Korean pine) protein is Small ribosomal subunit protein uS3c (rps3).